The primary structure comprises 213 residues: Redox-sensing transcriptional repressor Rex (213 aa).

A DNA-binding region (H-T-H motif) is located at residues 16–55; that stretch reads VYSRFLERMDRNGIVTVSSGEIAEGVGVSSAQVRKDLAYF. 90 to 95 lines the NAD(+) pocket; that stretch reads GAGNLG.

The protein belongs to the transcriptional regulatory Rex family. In terms of assembly, homodimer.

The protein localises to the cytoplasm. In terms of biological role, modulates transcription in response to changes in cellular NADH/NAD(+) redox state. The polypeptide is Redox-sensing transcriptional repressor Rex (Pelotomaculum thermopropionicum (strain DSM 13744 / JCM 10971 / SI)).